The sequence spans 519 residues: NADH-quinone oxidoreductase subunit C/D (519 aa).

The interval 1–138 is NADH dehydrogenase I subunit C; that stretch reads MSERIEIPAE…TNEEPVDTTQ (138 aa). Residues 159–519 are NADH dehydrogenase I subunit D; it reads DEYIINIGPQ…VDYVVPDIDR (361 aa).

It in the N-terminal section; belongs to the complex I 30 kDa subunit family. In the C-terminal section; belongs to the complex I 49 kDa subunit family. As to quaternary structure, NDH-1 is composed of 13 different subunits. Subunits NuoB, CD, E, F, and G constitute the peripheral sector of the complex.

Its subcellular location is the cell inner membrane. The catalysed reaction is a quinone + NADH + 5 H(+)(in) = a quinol + NAD(+) + 4 H(+)(out). In terms of biological role, NDH-1 shuttles electrons from NADH, via FMN and iron-sulfur (Fe-S) centers, to quinones in the respiratory chain. The immediate electron acceptor for the enzyme in this species is believed to be a menaquinone. Couples the redox reaction to proton translocation (for every two electrons transferred, four hydrogen ions are translocated across the cytoplasmic membrane), and thus conserves the redox energy in a proton gradient. This is NADH-quinone oxidoreductase subunit C/D from Phocaeicola vulgatus (strain ATCC 8482 / DSM 1447 / JCM 5826 / CCUG 4940 / NBRC 14291 / NCTC 11154) (Bacteroides vulgatus).